Consider the following 31-residue polypeptide: Monocyclic monoterpene ketone monooxygenase (31 aa).

Position 20-25 (20-25 (GAGFXG)) interacts with FAD.

As to quaternary structure, monomer. Requires FAD as cofactor.

It catalyses the reaction 1-hydroxylimonen-2-one + NADPH + O2 = 3-isopropenyl-6-oxoheptanoate + NADP(+) + H2O. The enzyme catalyses (1R,4S)-1-hydroxylimonen-2-one + NADPH + O2 + H(+) = (4S,7S)-7-hydroxy-4-isopropenyl-7-methyloxepan-2-one + NADP(+) + H2O. The catalysed reaction is (1S,4R)-1-hydroxylimonen-2-one + NADPH + O2 + H(+) = (4R,7R)-7-hydroxy-4-isopropenyl-7-methyloxepan-2-one + NADP(+) + H2O. It carries out the reaction (1R,4R)-dihydrocarvone + NADPH + O2 + H(+) = (4R,7R)-4-isopropenyl-7-methyloxepan-2-one + NADP(+) + H2O. It catalyses the reaction (1S,4R)-menthone + NADPH + O2 + H(+) = (4S,7R)-7-isopropyl-4-methyloxepan-2-one + NADP(+) + H2O. The enzyme catalyses (1R,4S)-menthone + NADPH + O2 + H(+) = (4R,7S)-7-isopropyl-4-methyloxepan-2-one + NADP(+) + H2O. The catalysed reaction is (1S,4R)-isodihydrocarvone + NADPH + O2 + H(+) = (3S,6R)-6-isopropenyl-3-methyloxepan-2-one + NADP(+) + H2O. Its pathway is terpene metabolism; monoterpene degradation. Its function is as follows. Catalyzes the NADPH- and oxygen-dependent oxidation of the monocyclic monoterpene ketones 1-hydroxy-2-oxolimonene, dihydrocarvone and menthone. Is able to convert all enantiomers of these natural substrates with almost equal efficiency. Is thus involved in the conversion of the monocyclic monoterpene ketone intermediates formed in the degradation pathways of all stereoisomers of three different monocyclic monoterpenes, i.e. limonene, (dihydro)carveol and menthol, which likely make R.erythropolis able to grow on these compounds as the sole source of carbon and energy. The chain is Monocyclic monoterpene ketone monooxygenase from Rhodococcus erythropolis (Arthrobacter picolinophilus).